We begin with the raw amino-acid sequence, 128 residues long: DELTA-urthionin-Uf1a (128 aa).

The first 24 residues, 1 to 24 (MEGKTVIVSLLLLSIVVGQIQVEA), serve as a signal peptide directing secretion. Disulfide bonds link Cys27–Cys64, Cys28–Cys56, and Cys40–Cys50. Positions 67–128 (LSIPEVTGEA…LCTKNSIETA (62 aa)) are cleaved as a propeptide — acidic domain.

Belongs to the plant thionin (TC 1.C.44) family. As to expression, expressed in trichomes, that are stiff epidermal hairs located on the surface of petioles and leaves.

It localises to the secreted. Its function is as follows. Plant defense protein that causes pain by probable disruption of cell membranes. Shows cytotoxic activity against the neuroblastoma cell line SH-SY5Y and slightly weaker activity against several non-neuronal cell lines. In vivo, intraplantar injection into mice causes several nocifensive responses, along with swelling and redness. The protein is DELTA-urthionin-Uf1a of Urtica ferox (Tree nettle).